The primary structure comprises 752 residues: Photosystem I P700 chlorophyll a apoprotein A1 (752 aa).

Transmembrane regions (helical) follow at residues 73 to 96, 159 to 182, 198 to 222, 294 to 312, 349 to 372, 388 to 414, 436 to 458, and 533 to 551; these read IFSAHFGQLAVIFLWLSGMYFHGA, LYCTAIGGLGMAALMLFAGWFHYH, MNHHLAGLLGLGCLGWAGHQIHLSL, TAHHHLALAVLFLAAGHMY, WHAQLAINLAMMGSLSIIVAHHMY, LSLFTHHMWIGGFCVVGAGAHASIFMV, AIVSHLNWVCIFLGFHSFGLYIH, and FMVHHIHAFTIHVTVLILV. Positions 575 and 584 each coordinate [4Fe-4S] cluster. 2 helical membrane-spanning segments follow: residues 591–612 and 666–688; these read HVFLGLFWMYNSLSVAIFHFSW and LSAYGLIFLAAHFVWAFSLMFLF. His-677 serves as a coordination point for chlorophyll a'. Positions 685 and 693 each coordinate chlorophyll a. Residue Trp-694 participates in phylloquinone binding. The chain crosses the membrane as a helical span at residues 726 to 746; sequence AVGVAHYLLGGIGTTWAFFLA.

It belongs to the PsaA/PsaB family. The PsaA/B heterodimer binds the P700 chlorophyll special pair and subsequent electron acceptors. PSI consists of a core antenna complex that captures photons, and an electron transfer chain that converts photonic excitation into a charge separation. The eukaryotic PSI reaction center is composed of at least 11 subunits. P700 is a chlorophyll a/chlorophyll a' dimer, A0 is one or more chlorophyll a, A1 is one or both phylloquinones and FX is a shared 4Fe-4S iron-sulfur center. is required as a cofactor.

It localises to the plastid. The protein localises to the chloroplast thylakoid membrane. The enzyme catalyses reduced [plastocyanin] + hnu + oxidized [2Fe-2S]-[ferredoxin] = oxidized [plastocyanin] + reduced [2Fe-2S]-[ferredoxin]. Functionally, psaA and PsaB bind P700, the primary electron donor of photosystem I (PSI), as well as the electron acceptors A0, A1 and FX. PSI is a plastocyanin/cytochrome c6-ferredoxin oxidoreductase, converting photonic excitation into a charge separation, which transfers an electron from the donor P700 chlorophyll pair to the spectroscopically characterized acceptors A0, A1, FX, FA and FB in turn. Oxidized P700 is reduced on the lumenal side of the thylakoid membrane by plastocyanin or cytochrome c6. The polypeptide is Photosystem I P700 chlorophyll a apoprotein A1 (Porphyra purpurea (Red seaweed)).